We begin with the raw amino-acid sequence, 228 residues long: UPF0173 metal-dependent hydrolase Tpen_1493 (228 aa).

Belongs to the UPF0173 family.

This chain is UPF0173 metal-dependent hydrolase Tpen_1493, found in Thermofilum pendens (strain DSM 2475 / Hrk 5).